The following is a 438-amino-acid chain: 3-phosphoshikimate 1-carboxyvinyltransferase (438 aa).

Lys-21 is a binding site for phosphoenolpyruvate. 3-phosphoshikimate is bound by residues Ser-22 and Arg-26. The interval 93–96 (NSGT) is phosphoenolpyruvate. The phosphoenolpyruvate site is built by Gly-95, Thr-96, and Arg-123. 3-phosphoshikimate-binding residues include Ser-167, Ala-168, Gln-169, Asp-315, and Lys-342. Residue Gln-169 participates in phosphoenolpyruvate binding. Asp-315 acts as the Proton acceptor in catalysis. Arg-346 and Arg-387 together coordinate phosphoenolpyruvate.

This sequence belongs to the EPSP synthase family. In terms of assembly, homodimer or homotetramer.

It is found in the cytoplasm. It catalyses the reaction 3-phosphoshikimate + phosphoenolpyruvate = 5-O-(1-carboxyvinyl)-3-phosphoshikimate + phosphate. Its pathway is metabolic intermediate biosynthesis; chorismate biosynthesis; chorismate from D-erythrose 4-phosphate and phosphoenolpyruvate: step 6/7. Its function is as follows. Catalyzes the transfer of the enolpyruvyl moiety of phosphoenolpyruvate (PEP) to the 5-hydroxyl of shikimate-3-phosphate (S3P) to produce enolpyruvyl shikimate-3-phosphate and inorganic phosphate. This chain is 3-phosphoshikimate 1-carboxyvinyltransferase, found in Coxiella burnetii (strain RSA 493 / Nine Mile phase I).